We begin with the raw amino-acid sequence, 238 residues long: Phosphoribosylaminoimidazole-succinocarboxamide synthase (238 aa).

It belongs to the SAICAR synthetase family.

The enzyme catalyses 5-amino-1-(5-phospho-D-ribosyl)imidazole-4-carboxylate + L-aspartate + ATP = (2S)-2-[5-amino-1-(5-phospho-beta-D-ribosyl)imidazole-4-carboxamido]succinate + ADP + phosphate + 2 H(+). Its pathway is purine metabolism; IMP biosynthesis via de novo pathway; 5-amino-1-(5-phospho-D-ribosyl)imidazole-4-carboxamide from 5-amino-1-(5-phospho-D-ribosyl)imidazole-4-carboxylate: step 1/2. In Marinomonas sp. (strain MWYL1), this protein is Phosphoribosylaminoimidazole-succinocarboxamide synthase.